The following is a 98-amino-acid chain: NADH-ubiquinone oxidoreductase chain 4L (98 aa).

3 consecutive transmembrane segments (helical) span residues 2-22 (PSIS…MLVF), 29-49 (SLLC…LFIM), and 61-81 (ILLL…LVMV).

It belongs to the complex I subunit 4L family. As to quaternary structure, core subunit of respiratory chain NADH dehydrogenase (Complex I) which is composed of 45 different subunits.

It is found in the mitochondrion inner membrane. The enzyme catalyses a ubiquinone + NADH + 5 H(+)(in) = a ubiquinol + NAD(+) + 4 H(+)(out). Core subunit of the mitochondrial membrane respiratory chain NADH dehydrogenase (Complex I) which catalyzes electron transfer from NADH through the respiratory chain, using ubiquinone as an electron acceptor. Part of the enzyme membrane arm which is embedded in the lipid bilayer and involved in proton translocation. This chain is NADH-ubiquinone oxidoreductase chain 4L (MT-ND4L), found in Lepilemur mitsinjoensis (Mitsinjo sportive lemur).